Reading from the N-terminus, the 386-residue chain is Manganese dependent endoglucanase Eg5A (386 aa).

The signal sequence occupies residues 1–17; the sequence is MLKYASIALALATLGVA. One can recognise a CBM1 domain in the interval 18–53; sequence QQQQWGQCGGIGWTGATTCVAGSVCSVLNPYYSQCI. The Proton donor role is filled by Glu209. Glu319 serves as the catalytic Nucleophile. Asn324 is a glycosylation site (N-linked (GlcNAc...) asparagine).

It belongs to the glycosyl hydrolase 5 (cellulase A) family. Mn(2+) is required as a cofactor.

It is found in the secreted. It carries out the reaction Endohydrolysis of (1-&gt;4)-beta-D-glucosidic linkages in cellulose, lichenin and cereal beta-D-glucans.. Its function is as follows. Secreted manganese dependent endoglucanase that acts by cleaving the beta-1,4-glucose linkage. Exhibits high activity toward carboxymethyl-cellulose (CMC), barley glucan, and glucomannan. Displays low activity on larminarin and xyloglucan but does not hydrolyze hemicellulose substrates such as birchwood xylan, arabinoxylan, and arabinan. This Phanerodontia chrysosporium (White-rot fungus) protein is Manganese dependent endoglucanase Eg5A.